The sequence spans 776 residues: 1,4-alpha-glucan branching enzyme GlgB (776 aa).

Residue Asp-431 is the Nucleophile of the active site. Glu-484 serves as the catalytic Proton donor.

Belongs to the glycosyl hydrolase 13 family. GlgB subfamily. As to quaternary structure, monomer.

It catalyses the reaction Transfers a segment of a (1-&gt;4)-alpha-D-glucan chain to a primary hydroxy group in a similar glucan chain.. It functions in the pathway glycan biosynthesis; glycogen biosynthesis. In terms of biological role, catalyzes the formation of the alpha-1,6-glucosidic linkages in glycogen by scission of a 1,4-alpha-linked oligosaccharide from growing alpha-1,4-glucan chains and the subsequent attachment of the oligosaccharide to the alpha-1,6 position. This is 1,4-alpha-glucan branching enzyme GlgB from Trichodesmium erythraeum (strain IMS101).